The chain runs to 328 residues: Transcription initiation factor IIE subunit beta (328 aa).

The segment at 32–105 (QKKTNDTVIT…SSPSKKVRPG (74 aa)) is disordered. At S52 the chain carries Phosphoserine. The segment covering 85–94 (LDDDDDDEDF) has biased composition (acidic residues). A phosphoserine mark is found at S97 and S106. Residues 113–187 (QANQTDISKS…FKYLSTYDVH (75 aa)) constitute a DNA-binding region (TFIIE beta).

The protein belongs to the TFIIE beta subunit family. TFIIE is a tetramer of two alpha (TFA1) and two beta (TFA2) subunits.

It localises to the nucleus. In terms of biological role, recruits TFIIH to the initiation complex and stimulates the RNA polymerase II C-terminal domain kinase and DNA-dependent ATPase activities of TFIIH. Both TFIIH and TFIIE are required for promoter clearance by RNA polymerase. In Saccharomyces cerevisiae (strain ATCC 204508 / S288c) (Baker's yeast), this protein is Transcription initiation factor IIE subunit beta (TFA2).